A 100-amino-acid polypeptide reads, in one-letter code: Urease subunit gamma (100 aa).

It belongs to the urease gamma subunit family. As to quaternary structure, heterotrimer of UreA (gamma), UreB (beta) and UreC (alpha) subunits. Three heterotrimers associate to form the active enzyme.

The protein resides in the cytoplasm. It carries out the reaction urea + 2 H2O + H(+) = hydrogencarbonate + 2 NH4(+). The protein operates within nitrogen metabolism; urea degradation; CO(2) and NH(3) from urea (urease route): step 1/1. This chain is Urease subunit gamma, found in Opitutus terrae (strain DSM 11246 / JCM 15787 / PB90-1).